Here is a 103-residue protein sequence, read N- to C-terminus: Alpha-ketoglutarate dehydrogenase component 4 (103 aa).

Met1 bears the N-acetylmethionine mark. The residue at position 5 (Lys5) is an N6-succinyllysine. The interval 20-69 (TPLIRFPDRRDNPKPNVSEALRSAGLPSHSSVISQHSKGSKSPDLLMYQG) is disordered. Polar residues predominate over residues 47-56 (SHSSVISQHS). Ser49, Ser61, and Ser90 each carry phosphoserine.

The protein belongs to the alpha-ketoglutarate dehydrogenase component 4 family. In terms of assembly, component of the 2-oxoglutarate dehydrogenase complex (OGDHC), composed of OGDH (2-oxoglutarate dehydrogenase; also called E1 subunit), DLST (dihydrolipoamide succinyltransferase; also called E2 subunit) and DLD (dihydrolipoamide dehydrogenase; also called E3 subunit), and the assembly factor KGD4. Within OGDHC complex, interacts (via N-terminus) with E3 subunit and (via C-terminus) with E2 subunit.

It is found in the mitochondrion. In terms of biological role, molecular adapter that is necessary to form a stable 2-oxoglutarate dehydrogenase enzyme complex (OGDHC). Enables the specific recruitment of E3 subunit to E2 subunit in the 2-oxoglutarate dehydrogenase complex (OGDHC). The protein is Alpha-ketoglutarate dehydrogenase component 4 of Homo sapiens (Human).